Here is a 302-residue protein sequence, read N- to C-terminus: Dihydroorotate dehydrogenase B (NAD(+)), catalytic subunit (302 aa).

FMN-binding positions include serine 20 and 44-45 (KG). Residues lysine 44 and 68-72 (NSVGL) each bind substrate. The FMN site is built by asparagine 98 and asparagine 125. Asparagine 125 is a substrate binding site. The Nucleophile role is filled by cysteine 128. FMN contacts are provided by lysine 163 and isoleucine 189. Residue 190–191 (NT) coordinates substrate. Residues glycine 215, 241–242 (GG), and 263–264 (GT) contribute to the FMN site.

This sequence belongs to the dihydroorotate dehydrogenase family. Type 1 subfamily. Heterotetramer of 2 PyrK and 2 PyrD type B subunits. FMN is required as a cofactor.

Its subcellular location is the cytoplasm. The catalysed reaction is (S)-dihydroorotate + NAD(+) = orotate + NADH + H(+). The protein operates within pyrimidine metabolism; UMP biosynthesis via de novo pathway; orotate from (S)-dihydroorotate (NAD(+) route): step 1/1. Functionally, catalyzes the conversion of dihydroorotate to orotate with NAD(+) as electron acceptor. This chain is Dihydroorotate dehydrogenase B (NAD(+)), catalytic subunit (pyrD), found in Thermoanaerobacter sp. (strain X514).